Consider the following 389-residue polypeptide: Meiosis-specific protein MEI4 (389 aa).

An interaction with REC114 region spans residues 1 to 127; sequence MDIQPWYLKT…LSQHFVESTD (127 aa).

This sequence belongs to the MEI4L family. In terms of assembly, part of the MCD recombinosome complex, at least composed of IHO1, REC114 and MEI4. Forms a complex with REC114; the interaction is required for MEI4 stability. Interacts (via N-terminal domain) with REC114 (via C-terminal domain). Interacts with IHO1. Expressed in adult testis and brain and in embryonic ovary.

It localises to the chromosome. Functionally, required for DNA double-strand breaks (DSBs) formation in unsynapsed regions during meiotic recombination. Probably acts by forming a complex with IHO1 and REC114, which activates DSBs formation in unsynapsed regions, an essential step to ensure completion of synapsis. In Mus musculus (Mouse), this protein is Meiosis-specific protein MEI4.